Here is a 158-residue protein sequence, read N- to C-terminus: Rhombotin-2 (158 aa).

LIM zinc-binding domains lie at 30 to 89 (CGGC…RLFG) and 94 to 153 (CASC…EWTK).

As to quaternary structure, interacts with BEX2 and KDM5A. Interacts via its LIM domains with ELF2 and LDB1. Also interacts with basic helix-loop-helix protein TAL1/SCL and can assemble in a complex with LMO2 and TAL1/SCL. Expressed in early mouse development in central nervous system, lung, kidney, liver and spleen but only very low levels occur in thymus.

The protein resides in the nucleus. Functionally, acts with TAL1/SCL to regulate red blood cell development. Also acts with LDB1 to maintain erythroid precursors in an immature state. The chain is Rhombotin-2 (Lmo2) from Mus musculus (Mouse).